The following is a 113-amino-acid chain: MSLRYYIKNILFGLYCTLIYIYLITKNSEGYYFLVSDKMLYAIVISTILCPYSKYAIEYIAFNFIKKDFFERRKNLNNAPVAKLNLFMLYNLLCLVLAIPFGLLGLFISIKNN.

This protein is able to protect a cell, which harbors the plasmid ColE1 encoding colicin E1, against colicin E1. The polypeptide is Colicin-E1 immunity protein (imm) (Escherichia coli).